The chain runs to 303 residues: Oxygen-dependent coproporphyrinogen-III oxidase (303 aa).

Residue S93 participates in substrate binding. 2 residues coordinate a divalent metal cation: H97 and H107. The active-site Proton donor is the H107. 109–111 (NVR) serves as a coordination point for substrate. A divalent metal cation-binding residues include H146 and H176. An important for dimerization region spans residues 241-276 (YVEFNLVYDRGTLFGLQSGGRTESILMSLPPQVRWG). A substrate-binding site is contributed by 259 to 261 (GGR).

It belongs to the aerobic coproporphyrinogen-III oxidase family. In terms of assembly, homodimer. A divalent metal cation is required as a cofactor.

Its subcellular location is the cytoplasm. The catalysed reaction is coproporphyrinogen III + O2 + 2 H(+) = protoporphyrinogen IX + 2 CO2 + 2 H2O. It participates in porphyrin-containing compound metabolism; protoporphyrin-IX biosynthesis; protoporphyrinogen-IX from coproporphyrinogen-III (O2 route): step 1/1. Functionally, involved in the heme biosynthesis. Catalyzes the aerobic oxidative decarboxylation of propionate groups of rings A and B of coproporphyrinogen-III to yield the vinyl groups in protoporphyrinogen-IX. This is Oxygen-dependent coproporphyrinogen-III oxidase from Pseudomonas putida (strain ATCC 47054 / DSM 6125 / CFBP 8728 / NCIMB 11950 / KT2440).